Reading from the N-terminus, the 668-residue chain is Fructose-1,6-bisphosphatase class 3 (668 aa).

It belongs to the FBPase class 3 family. Mn(2+) is required as a cofactor.

It catalyses the reaction beta-D-fructose 1,6-bisphosphate + H2O = beta-D-fructose 6-phosphate + phosphate. The protein operates within carbohydrate biosynthesis; gluconeogenesis. The chain is Fructose-1,6-bisphosphatase class 3 from Clostridium botulinum (strain Kyoto / Type A2).